Here is a 306-residue protein sequence, read N- to C-terminus: Phospho-N-acetylmuramoyl-pentapeptide-transferase (306 aa).

10 helical membrane passes run 2–22, 47–67, 71–91, 105–125, 131–151, 162–182, 185–205, 209–229, 236–256, and 284–304; these read IALL…LKYW, SGTP…FLFF, FFIS…DLKL, IFLS…DYKI, LIID…IAVP, GLAG…SFHF, IALE…FNSH, IFMG…LSVV, LIFL…QVFF, and IVWR…VLWY.

This sequence belongs to the glycosyltransferase 4 family. MraY subfamily. Mg(2+) serves as cofactor.

Its subcellular location is the cell inner membrane. It carries out the reaction UDP-N-acetyl-alpha-D-muramoyl-L-alanyl-gamma-D-glutamyl-meso-2,6-diaminopimeloyl-D-alanyl-D-alanine + di-trans,octa-cis-undecaprenyl phosphate = di-trans,octa-cis-undecaprenyl diphospho-N-acetyl-alpha-D-muramoyl-L-alanyl-D-glutamyl-meso-2,6-diaminopimeloyl-D-alanyl-D-alanine + UMP. It participates in cell wall biogenesis; peptidoglycan biosynthesis. Catalyzes the initial step of the lipid cycle reactions in the biosynthesis of the cell wall peptidoglycan: transfers peptidoglycan precursor phospho-MurNAc-pentapeptide from UDP-MurNAc-pentapeptide onto the lipid carrier undecaprenyl phosphate, yielding undecaprenyl-pyrophosphoryl-MurNAc-pentapeptide, known as lipid I. The protein is Phospho-N-acetylmuramoyl-pentapeptide-transferase of Dictyoglomus thermophilum (strain ATCC 35947 / DSM 3960 / H-6-12).